The sequence spans 294 residues: tRNA dimethylallyltransferase (294 aa).

Gly-11–Thr-18 is an ATP binding site. Thr-13–Thr-18 contacts substrate. Residues Asp-36 to Gln-39 form an interaction with substrate tRNA region.

It belongs to the IPP transferase family. As to quaternary structure, monomer. The cofactor is Mg(2+).

It catalyses the reaction adenosine(37) in tRNA + dimethylallyl diphosphate = N(6)-dimethylallyladenosine(37) in tRNA + diphosphate. Catalyzes the transfer of a dimethylallyl group onto the adenine at position 37 in tRNAs that read codons beginning with uridine, leading to the formation of N6-(dimethylallyl)adenosine (i(6)A). In Lactococcus lactis subsp. lactis (strain IL1403) (Streptococcus lactis), this protein is tRNA dimethylallyltransferase.